The primary structure comprises 284 residues: 4-diphosphocytidyl-2-C-methyl-D-erythritol kinase (284 aa).

Residue K22 is part of the active site. An ATP-binding site is contributed by 104–114 (PVGAGLGGASS). D146 is a catalytic residue.

The protein belongs to the GHMP kinase family. IspE subfamily.

The enzyme catalyses 4-CDP-2-C-methyl-D-erythritol + ATP = 4-CDP-2-C-methyl-D-erythritol 2-phosphate + ADP + H(+). It functions in the pathway isoprenoid biosynthesis; isopentenyl diphosphate biosynthesis via DXP pathway; isopentenyl diphosphate from 1-deoxy-D-xylulose 5-phosphate: step 3/6. Its function is as follows. Catalyzes the phosphorylation of the position 2 hydroxy group of 4-diphosphocytidyl-2C-methyl-D-erythritol. This is 4-diphosphocytidyl-2-C-methyl-D-erythritol kinase from Hydrogenobaculum sp. (strain Y04AAS1).